Consider the following 601-residue polypeptide: Protein FREE1 (601 aa).

Residues 1 to 240 form a disordered region; that stretch reads MQQGDYNSYY…SGEYPAFEDS (240 aa). A compositionally biased stretch (pro residues) spans 21-35; that stretch reads TPNPNPNPNPSPPAP. Polar residues-rich tracts occupy residues 63–79 and 125–155; these read DYSNYSQNYTPYGQNSE and LSSYGSFDSTAPYQQPTSQHMYYSPYDQHQT. Pro residues predominate over residues 161 to 175; sequence APPPSSAPAPNPNPA. Low complexity predominate over residues 176-197; that stretch reads PYSSSLYSAPPYSSGGSSIPPS. A compositionally biased stretch (basic and acidic residues) spans 214 to 231; the sequence is NRSRSDLGSDLYGKRSDS. Ser-218 carries the phosphoserine modification. The interval 338-344 is nuclear export signal; sequence LDGLRML. The FYVE-type zinc-finger motif lies at 455–515; it reads DEAVSKCTSC…VCDRCMAEVS (61 aa). Residues Cys-461, Cys-464, Cys-477, Cys-480, Cys-485, Cys-488, Cys-507, and Cys-510 each contribute to the Zn(2+) site. The stretch at 527 to 552 forms a coiled coil; it reads RNVSLQSHEDLARKLQEEMERNRKSS. Phosphoserine occurs at positions 530 and 533. Positions 542–561 are disordered; that stretch reads QEEMERNRKSSSGLREGSGR.

As to quaternary structure, part of the ESCRT-I complex. Interacts with VPS23A and VPS23B, but not with VPS28 or VPS37. Interacts with IRT1. Interacts with SH3P2. Interacts with SH3P3, but not with SH3P1. Interacts (via N-terminus) with PYL4 and PYR3. Interacts (via C-terminus) with SNRK2D/SNRK2.2, SNRK2I/SNRK2.3, ABF4 and ABI5. Interacts with SINAT1, SINAT2, SINAT3 and SINAT4. Interacts with SINAT5. Component of a phosphoinositide 3-kinase (PI3K) complex containing ATG6, SH3P2 and FREE1. In terms of processing, phosphorylated at Ser-530 and Ser-533 by SNRK2D/SNRK2.2 and SNRK2I/SNRK2.3 in response to abscisic acid (ABA). Phosphorylation is necessary for ABA-induced FREE1 nuclear import. Post-translationally, ubiquitinated by SINAT1, SINAT2, SINAT3 and SINAT4 for subsequent proteasomal degradation. In terms of tissue distribution, ubiquitous. Lowest expression in mature seeds.

The protein localises to the cytoplasm. The protein resides in the prevacuolar compartment membrane. It localises to the late endosome. It is found in the endosome. Its subcellular location is the multivesicular body. The protein localises to the nucleus. In terms of biological role, endosomal sorting complex required for transport (ESCRT) component regulating multivesicular body (MVB) protein sorting and plant growth. Required for the formation of intra-luminal vesicles (ILVs)in MVBs. Binds to phosphatidylinositol-3-phosphate (PI3P) and ubiquitin. Controls IRT1 recycling to the plasma membrane and impacts the polar delivery of this transporter to the outer plasma membrane domain. Regulates ubiquitin-dependent membrane protein degradation, vacuolar transport, autophagy, and vacuole biogenesis. ESCRT component that binds ubiquitin and regulates vacuolar sorting of proteins. Attenuates abscisic acid (ABA) signaling through RSL1-triggered degradation of the ABA receptors PYR1 and PYL4. Interacts with PYL4 and PYR1, and delivers the ubiquitinated ABA receptors as cargo to the vacuolar degradation pathway. In response to ABA, is phosphorylated by SnRK2 kinases which mediate FREE1 nuclear import. In the nucleus, interacts with the ABA-responsive transcription factors ABF4 and ABI5 to reduce their ability to bind to their cis-regulatory sequences of downstream genes, thus leading to transcriptional inhibition of ABA signaling pathway. Negatively regulates salt stress tolerance via a negative feedback loop involving ABA signaling pathway. This Arabidopsis thaliana (Mouse-ear cress) protein is Protein FREE1.